A 337-amino-acid polypeptide reads, in one-letter code: tRNA N6-adenosine threonylcarbamoyltransferase (337 aa).

Fe cation is bound by residues H111 and H115. Substrate is bound by residues 134-138 (LVSGG), D167, G180, and N272. Residue D300 coordinates Fe cation.

Belongs to the KAE1 / TsaD family. The cofactor is Fe(2+).

It is found in the cytoplasm. The catalysed reaction is L-threonylcarbamoyladenylate + adenosine(37) in tRNA = N(6)-L-threonylcarbamoyladenosine(37) in tRNA + AMP + H(+). In terms of biological role, required for the formation of a threonylcarbamoyl group on adenosine at position 37 (t(6)A37) in tRNAs that read codons beginning with adenine. Is involved in the transfer of the threonylcarbamoyl moiety of threonylcarbamoyl-AMP (TC-AMP) to the N6 group of A37, together with TsaE and TsaB. TsaD likely plays a direct catalytic role in this reaction. In Methylococcus capsulatus (strain ATCC 33009 / NCIMB 11132 / Bath), this protein is tRNA N6-adenosine threonylcarbamoyltransferase.